A 207-amino-acid polypeptide reads, in one-letter code: Ribonuclease HII (207 aa).

One can recognise an RNase H type-2 domain in the interval 12–201 (ALVAGVDEVG…VRELLDVVSI (190 aa)). Positions 18, 19, and 110 each coordinate a divalent metal cation.

Belongs to the RNase HII family. Mn(2+) serves as cofactor. Mg(2+) is required as a cofactor.

The protein localises to the cytoplasm. The enzyme catalyses Endonucleolytic cleavage to 5'-phosphomonoester.. In terms of biological role, endonuclease that specifically degrades the RNA of RNA-DNA hybrids. The sequence is that of Ribonuclease HII from Azotobacter vinelandii (strain DJ / ATCC BAA-1303).